The sequence spans 424 residues: 26S proteasome regulatory subunit 4 homolog (424 aa).

Basic and acidic residues predominate over residues 1-11; the sequence is MSRDKSERDNL. The tract at residues 1–33 is disordered; it reads MSRDKSERDNLQDTTTINLRRRRRVKEGKAASK. 210 to 217 contacts ATP; it reads GLPGTGKT.

It belongs to the AAA ATPase family. As to quaternary structure, the 26S proteasome consists of a 20S proteasome core and two 19S regulatory subunits. The 20S proteasome core is composed of 28 subunits that are arranged in four stacked rings, resulting in a barrel-shaped structure. The two end rings are each formed by seven alpha subunits, and the two central rings are each formed by seven beta subunits. The catalytic chamber with the active sites is on the inside of the barrel.

Its subcellular location is the cytoplasm. The protein localises to the nucleus. Acts as a regulatory subunit of the 26S proteasome which degrades poly-ubiquitinated proteins in the cytoplasm and in the nucleus. It is essential for the regulated turnover of proteins and for the removal of misfolded proteins. The proteasome is a multicatalytic proteinase complex that is characterized by its ability to cleave peptides with Arg, Phe, Tyr, Leu, and Glu adjacent to the leaving group at neutral or slightly basic pH. The chain is 26S proteasome regulatory subunit 4 homolog (RPT2) from Encephalitozoon cuniculi (strain GB-M1) (Microsporidian parasite).